Reading from the N-terminus, the 639-residue chain is E3 ubiquitin-protein ligase HEL2 (639 aa).

The interval Met1–Asp55 is disordered. Ser2 carries the post-translational modification N-acetylserine. Composition is skewed to polar residues over residues Glu7–Lys26 and Leu43–Ala54. Phosphothreonine is present on Thr57. The segment at Cys64 to Arg104 adopts an RING-type zinc-finger fold. One can recognise an LIM zinc-binding domain in the interval Pro222–Val292. The span at Ser343–Ser354 shows a compositional bias: low complexity. Disordered regions lie at residues Ser343–Ser367 and Leu550–Lys631. Phosphoserine is present on Ser354.

It belongs to the ZNF598/HEL2 family. Interacts with the E2 ubiquitin-conjugating enzyme UBC4. Interacts with histones H3 and H4.

The protein resides in the cytoplasm. It catalyses the reaction S-ubiquitinyl-[E2 ubiquitin-conjugating enzyme]-L-cysteine + [acceptor protein]-L-lysine = [E2 ubiquitin-conjugating enzyme]-L-cysteine + N(6)-ubiquitinyl-[acceptor protein]-L-lysine.. The protein operates within protein modification; protein ubiquitination. Its function is as follows. E3 ubiquitin-protein ligase that plays a key role in the ribosome quality control (RQC), a pathway that takes place when a ribosome has stalled during translation, leading to degradation of nascent peptide chains. HEL2 is activated when ribosomes are stalled within an mRNA following translation of prematurely polyadenylated mRNAs. Acts as a ribosome collision sensor: specifically recognizes and binds collided ribosome and ubiquitinates the 40S ribosomal proteins RPS20/uS10 and RPS3/uS3. Catalyzes 'Lys-63'-linked polyubiquitination of RPS20/uS10, promoting recruitment of the RQT (ribosome quality control trigger) complex, which drives the disassembly of stalled ribosomes, followed by degradation of nascent peptides. HEL2 also acts as an activator of the No-Go decay (NGD) pathway by mediating polyubiquitination of monoubiquitinated RPS3/uS3 and RPS7/es7: RPS3/uS3 and RPS7/es7 are first monoubiquitinated by MAG2 and MOT2/NOT4, respectively, and HEL2 mediates formation of 'Lys-63'-linked polyubiquitin chains on monoubiquitin, leading to activation of the NGD pathway in a CUE2-mediated endonucleolytic cleavage. Polyubiquitination of RPS3/uS3 also triggers degradation of non-functional 18S rRNA. The RQC pathway and the integrated stress response (ISR) antagonize each other: HEL2 prevents the activation of GCN2, while GCN2 suppresses RQC activation. The RQC pathway functions as a preventive quality control in the secretory pathway: HEL2 binds preferentially to the pre-engaged secretory ribosome-nascent chain complexes and prevents mistargeting of secretory proteins into mitochondria. Independently of its role in RQC, also involved in the polyubiquitination and proteasomal-degradation of excess histone proteins. The sequence is that of E3 ubiquitin-protein ligase HEL2 from Saccharomyces cerevisiae (strain ATCC 204508 / S288c) (Baker's yeast).